The following is an 872-amino-acid chain: Paladin (872 aa).

The interval 1–37 is disordered; that stretch reads MGTTASAAQQVPSTVPSSENVQGNGSGSSNVEDRNSL. A lipid anchor (N-myristoyl glycine) is attached at Gly-2. Residues 186-210 adopt a coiled-coil conformation; sequence RRKENLHENLHDLEKGLRAENLELA.

This sequence belongs to the paladin family.

Its subcellular location is the cytoplasm. It localises to the cytosol. In Xenopus tropicalis (Western clawed frog), this protein is Paladin (pald1).